The sequence spans 378 residues: Ribosomal RNA large subunit methyltransferase G (378 aa).

The protein belongs to the methyltransferase superfamily. RlmG family.

It is found in the cytoplasm. The enzyme catalyses guanosine(1835) in 23S rRNA + S-adenosyl-L-methionine = N(2)-methylguanosine(1835) in 23S rRNA + S-adenosyl-L-homocysteine + H(+). Its function is as follows. Specifically methylates the guanine in position 1835 (m2G1835) of 23S rRNA. The polypeptide is Ribosomal RNA large subunit methyltransferase G (Shewanella sp. (strain W3-18-1)).